Reading from the N-terminus, the 139-residue chain is Large ribosomal subunit protein bL17 (139 aa).

It belongs to the bacterial ribosomal protein bL17 family. In terms of assembly, part of the 50S ribosomal subunit. Contacts protein L32.

The polypeptide is Large ribosomal subunit protein bL17 (Azorhizobium caulinodans (strain ATCC 43989 / DSM 5975 / JCM 20966 / LMG 6465 / NBRC 14845 / NCIMB 13405 / ORS 571)).